The sequence spans 217 residues: Cytidylate kinase (217 aa).

10 to 18 (GPAGAGKST) is a binding site for ATP.

Belongs to the cytidylate kinase family. Type 1 subfamily.

The protein resides in the cytoplasm. The enzyme catalyses CMP + ATP = CDP + ADP. It carries out the reaction dCMP + ATP = dCDP + ADP. The polypeptide is Cytidylate kinase (Clostridium botulinum (strain ATCC 19397 / Type A)).